Consider the following 523-residue polypeptide: Protein nucleotidyltransferase YdiU (523 aa).

ATP-binding residues include glycine 101, glycine 103, arginine 104, lysine 128, aspartate 140, glycine 141, arginine 198, and arginine 205. Catalysis depends on aspartate 275, which acts as the Proton acceptor. Residues asparagine 276 and aspartate 285 each contribute to the Mg(2+) site. An ATP-binding site is contributed by aspartate 285.

This sequence belongs to the SELO family. Mg(2+) is required as a cofactor. The cofactor is Mn(2+).

It carries out the reaction L-seryl-[protein] + ATP = 3-O-(5'-adenylyl)-L-seryl-[protein] + diphosphate. The catalysed reaction is L-threonyl-[protein] + ATP = 3-O-(5'-adenylyl)-L-threonyl-[protein] + diphosphate. The enzyme catalyses L-tyrosyl-[protein] + ATP = O-(5'-adenylyl)-L-tyrosyl-[protein] + diphosphate. It catalyses the reaction L-histidyl-[protein] + UTP = N(tele)-(5'-uridylyl)-L-histidyl-[protein] + diphosphate. It carries out the reaction L-seryl-[protein] + UTP = O-(5'-uridylyl)-L-seryl-[protein] + diphosphate. The catalysed reaction is L-tyrosyl-[protein] + UTP = O-(5'-uridylyl)-L-tyrosyl-[protein] + diphosphate. Nucleotidyltransferase involved in the post-translational modification of proteins. It can catalyze the addition of adenosine monophosphate (AMP) or uridine monophosphate (UMP) to a protein, resulting in modifications known as AMPylation and UMPylation. The protein is Protein nucleotidyltransferase YdiU of Aromatoleum aromaticum (strain DSM 19018 / LMG 30748 / EbN1) (Azoarcus sp. (strain EbN1)).